The primary structure comprises 95 residues: Small ribosomal subunit protein uS15 (95 aa).

Belongs to the universal ribosomal protein uS15 family. Part of the 30S ribosomal subunit. Forms a bridge to the 50S subunit in the 70S ribosome, contacting the 23S rRNA.

One of the primary rRNA binding proteins, it binds directly to 16S rRNA where it helps nucleate assembly of the platform of the 30S subunit by binding and bridging several RNA helices of the 16S rRNA. Functionally, forms an intersubunit bridge (bridge B4) with the 23S rRNA of the 50S subunit in the ribosome. The sequence is that of Small ribosomal subunit protein uS15 from Sulfurihydrogenibium sp. (strain YO3AOP1).